The chain runs to 474 residues: tRNA-2-methylthio-N(6)-dimethylallyladenosine synthase (474 aa).

Residues 3–120 (KKLLIKTWGC…LPEMIRQSQS (118 aa)) form the MTTase N-terminal domain. Residues Cys-12, Cys-49, Cys-83, Cys-157, Cys-161, and Cys-164 each coordinate [4Fe-4S] cluster. The 233-residue stretch at 143–375 (KAEGATAFVS…QQQVNSQAMR (233 aa)) folds into the Radical SAM core domain. The region spanning 378-441 (RLMLDTEQRV…ANSLRGELVR (64 aa)) is the TRAM domain.

The protein belongs to the methylthiotransferase family. MiaB subfamily. As to quaternary structure, monomer. Requires [4Fe-4S] cluster as cofactor.

Its subcellular location is the cytoplasm. The catalysed reaction is N(6)-dimethylallyladenosine(37) in tRNA + (sulfur carrier)-SH + AH2 + 2 S-adenosyl-L-methionine = 2-methylsulfanyl-N(6)-dimethylallyladenosine(37) in tRNA + (sulfur carrier)-H + 5'-deoxyadenosine + L-methionine + A + S-adenosyl-L-homocysteine + 2 H(+). Functionally, catalyzes the methylthiolation of N6-(dimethylallyl)adenosine (i(6)A), leading to the formation of 2-methylthio-N6-(dimethylallyl)adenosine (ms(2)i(6)A) at position 37 in tRNAs that read codons beginning with uridine. This chain is tRNA-2-methylthio-N(6)-dimethylallyladenosine synthase, found in Aliivibrio fischeri (strain ATCC 700601 / ES114) (Vibrio fischeri).